We begin with the raw amino-acid sequence, 275 residues long: Formamidopyrimidine-DNA glycosylase (275 aa).

The active-site Schiff-base intermediate with DNA is proline 2. The active-site Proton donor is glutamate 3. Lysine 59 functions as the Proton donor; for beta-elimination activity in the catalytic mechanism. Histidine 92, arginine 111, and arginine 155 together coordinate DNA. An FPG-type zinc finger spans residues 240 to 274 (NVYGRAGKACPKCGTTIEKQVLGQRSSYYCPQCQR). The active-site Proton donor; for delta-elimination activity is arginine 264.

The protein belongs to the FPG family. In terms of assembly, monomer. Zn(2+) serves as cofactor.

It catalyses the reaction Hydrolysis of DNA containing ring-opened 7-methylguanine residues, releasing 2,6-diamino-4-hydroxy-5-(N-methyl)formamidopyrimidine.. The enzyme catalyses 2'-deoxyribonucleotide-(2'-deoxyribose 5'-phosphate)-2'-deoxyribonucleotide-DNA = a 3'-end 2'-deoxyribonucleotide-(2,3-dehydro-2,3-deoxyribose 5'-phosphate)-DNA + a 5'-end 5'-phospho-2'-deoxyribonucleoside-DNA + H(+). Involved in base excision repair of DNA damaged by oxidation or by mutagenic agents. Acts as a DNA glycosylase that recognizes and removes damaged bases. Has a preference for oxidized purines, such as 7,8-dihydro-8-oxoguanine (8-oxoG). Has AP (apurinic/apyrimidinic) lyase activity and introduces nicks in the DNA strand. Cleaves the DNA backbone by beta-delta elimination to generate a single-strand break at the site of the removed base with both 3'- and 5'-phosphates. This Magnetococcus marinus (strain ATCC BAA-1437 / JCM 17883 / MC-1) protein is Formamidopyrimidine-DNA glycosylase.